Consider the following 351-residue polypeptide: MLFQTLKSIGELYKEPMDMVQRRLDSLSKPLGSLGRLEDIIKKLAGITGEVFPCVDKKAVIIMCADNGVVEEGISSCPKDVTSKVTRNFLKGITAINAFAKHTGSDIVVVDIGVDDDMDCEGIVKRKVRKGTWNIAKGPAMTRKEAIEAIEVGISIVEELGRKGVNLLGTGEMGIGNTTTSSAVSTVLTDSKAENMVGRGAGLSDEALKRKISIVKKAIDLNRPDANDPIDVVSKVGGFDIAGLAGCFIGAAACRIPILIDGFISATAALAAVRMEPKVKNFIFPSHGSAEPGSKKVMEALGFEPILNLEMRVGEGTGAALAFHIFDCAVSVYRNMGTFEDACIEQYQPQV.

Residue Glu-315 is the Proton acceptor of the active site.

This sequence belongs to the CobT family.

The catalysed reaction is 5,6-dimethylbenzimidazole + nicotinate beta-D-ribonucleotide = alpha-ribazole 5'-phosphate + nicotinate + H(+). It functions in the pathway nucleoside biosynthesis; alpha-ribazole biosynthesis; alpha-ribazole from 5,6-dimethylbenzimidazole: step 1/2. Catalyzes the synthesis of alpha-ribazole-5'-phosphate from nicotinate mononucleotide (NAMN) and 5,6-dimethylbenzimidazole (DMB). This chain is Nicotinate-nucleotide--dimethylbenzimidazole phosphoribosyltransferase, found in Acetivibrio thermocellus (strain ATCC 27405 / DSM 1237 / JCM 9322 / NBRC 103400 / NCIMB 10682 / NRRL B-4536 / VPI 7372) (Clostridium thermocellum).